A 159-amino-acid polypeptide reads, in one-letter code: U1 small nuclear ribonucleoprotein C (159 aa).

The segment at 4–36 (FYCDYCDTYLTHDSPSVRKTHCSGRKHKENVKD) adopts a Matrin-type zinc-finger fold. Residues 61–99 (KIPPTPFPGAPPPGGSLLPHPSIGGPPRPGMLPAPPMGG) are disordered. 2 stretches are compositionally biased toward pro residues: residues 63–74 (PPTPFPGAPPPG) and 84–99 (GGPP…PMGG).

The protein belongs to the U1 small nuclear ribonucleoprotein C family. Component of the U1 snRNP. The U1 snRNP is composed of the U1 snRNA and the 7 core Sm proteins snrpb, snrpd1, snrpd2, snrpd3, snrpe, snrpf and snrpg that assemble in a heptameric protein ring on the Sm site of the small nuclear RNA to form the core snRNP, and at least 3 U1 snRNP-specific proteins snrnp70/U1-70K, snrpa/U1-A and snrpc/U1-C. snrpc/U1-C interacts with U1 snRNA and the 5' splice-site region of the pre-mRNA.

It is found in the nucleus. Functionally, component of the spliceosomal U1 snRNP, which is essential for recognition of the pre-mRNA 5' splice-site and the subsequent assembly of the spliceosome. snrpc/U1-C is directly involved in initial 5' splice-site recognition for both constitutive and regulated alternative splicing. The interaction with the 5' splice-site seems to precede base-pairing between the pre-mRNA and the U1 snRNA. Stimulates commitment or early (E) complex formation by stabilizing the base pairing of the 5' end of the U1 snRNA and the 5' splice-site region. The sequence is that of U1 small nuclear ribonucleoprotein C from Danio rerio (Zebrafish).